A 491-amino-acid chain; its full sequence is Probable cytosol aminopeptidase (491 aa).

Positions 264 and 269 each coordinate Mn(2+). Residue K276 is part of the active site. Mn(2+) contacts are provided by D287, D346, and E348. R350 is an active-site residue.

This sequence belongs to the peptidase M17 family. The cofactor is Mn(2+).

It localises to the cytoplasm. The enzyme catalyses Release of an N-terminal amino acid, Xaa-|-Yaa-, in which Xaa is preferably Leu, but may be other amino acids including Pro although not Arg or Lys, and Yaa may be Pro. Amino acid amides and methyl esters are also readily hydrolyzed, but rates on arylamides are exceedingly low.. It carries out the reaction Release of an N-terminal amino acid, preferentially leucine, but not glutamic or aspartic acids.. Functionally, presumably involved in the processing and regular turnover of intracellular proteins. Catalyzes the removal of unsubstituted N-terminal amino acids from various peptides. This is Probable cytosol aminopeptidase from Xylella fastidiosa (strain Temecula1 / ATCC 700964).